Here is a 59-residue protein sequence, read N- to C-terminus: Large ribosomal subunit protein uL30 (59 aa).

It belongs to the universal ribosomal protein uL30 family. In terms of assembly, part of the 50S ribosomal subunit.

The chain is Large ribosomal subunit protein uL30 from Geobacter sulfurreducens (strain ATCC 51573 / DSM 12127 / PCA).